A 101-amino-acid polypeptide reads, in one-letter code: uncharacterized protein (101 aa).

This is an uncharacterized protein from Encephalitozoon cuniculi (strain GB-M1) (Microsporidian parasite).